The chain runs to 476 residues: Xylan O-acetyltransferase 4 (476 aa).

Residues 1–37 (MTKPQQQSPPSTTATTTTSPPPPPPSTPPPASSSSSS) form a disordered region. The Cytoplasmic segment spans residues 1–63 (MTKPQQQSPP…SLLSALRRSP (63 aa)). The span at 8–18 (SPPSTTATTTT) shows a compositional bias: low complexity. A compositionally biased stretch (pro residues) spans 19–31 (SPPPPPPSTPPPA). The helical; Signal-anchor for type II membrane protein transmembrane segment at 64-80 (VTTLVAAFFLLALFMYG) threads the bilayer. Topologically, residues 81-476 (EDVRTLAELS…PSPHPPLPPQ (396 aa)) are lumenal. 3 N-linked (GlcNAc...) asparagine glycosylation sites follow: N103, N128, and N167. Cystine bridges form between C117–C168, C139–C204, C148–C444, and C360–C440. The short motif at 191–193 (GDS) is the GDS motif element. The active-site Nucleophile is S193. Residues N299 and N369 are each glycosylated (N-linked (GlcNAc...) asparagine). The active-site Proton donor is D439. The DXXH motif motif lies at 439 to 442 (DCIH). The Proton acceptor role is filled by H442.

It belongs to the PC-esterase family. TBL subfamily. As to expression, highly expressed in leaves. Expressed in roots, stems and inflorescences.

The protein resides in the golgi apparatus membrane. Functionally, xylan acetyltransferase required for 2-O- and 3-O-monoacetylation of xylosyl residues in xylan. Catalyzes the 2-O-acetylation of xylan, followed by nonenzymatic acetyl migration to the O-3 position, resulting in products that are monoacetylated at both O-2 and O-3 positions. The polypeptide is Xylan O-acetyltransferase 4 (Oryza sativa subsp. japonica (Rice)).